Consider the following 218-residue polypeptide: Thiopurine S-methyltransferase (218 aa).

The S-adenosyl-L-methionine site is built by Trp10, Leu45, Glu66, and Arg123.

It belongs to the class I-like SAM-binding methyltransferase superfamily. TPMT family.

Its subcellular location is the cytoplasm. The catalysed reaction is S-adenosyl-L-methionine + a thiopurine = S-adenosyl-L-homocysteine + a thiopurine S-methylether.. This Pseudomonas aeruginosa (strain ATCC 15692 / DSM 22644 / CIP 104116 / JCM 14847 / LMG 12228 / 1C / PRS 101 / PAO1) protein is Thiopurine S-methyltransferase.